The sequence spans 274 residues: NAD-dependent protein deacetylase (274 aa).

One can recognise a Deacetylase sirtuin-type domain in the interval 1-274; the sequence is MDSRMSDLQA…CDEVLAEVVS (274 aa). NAD(+) is bound by residues 26–46 and 104–107; these read GAGC…GQWK and QNVD. His-122 functions as the Proton acceptor in the catalytic mechanism. Zn(2+)-binding residues include Cys-130, Cys-133, Cys-181, and Cys-184. Residues 221-223, 247-249, and Cys-265 each bind NAD(+); these read GSS and NLG.

This sequence belongs to the sirtuin family. Class II subfamily. Zn(2+) is required as a cofactor.

Its subcellular location is the cytoplasm. The enzyme catalyses N(6)-acetyl-L-lysyl-[protein] + NAD(+) + H2O = 2''-O-acetyl-ADP-D-ribose + nicotinamide + L-lysyl-[protein]. NAD-dependent protein deacetylase which modulates the activities of several enzymes which are inactive in their acetylated form. This chain is NAD-dependent protein deacetylase, found in Bordetella bronchiseptica (strain ATCC BAA-588 / NCTC 13252 / RB50) (Alcaligenes bronchisepticus).